A 61-amino-acid polypeptide reads, in one-letter code: Bactridin-1 (61 aa).

An LCN-type CS-alpha/beta domain is found at 1-61 (KDGYIIEHRG…KIFDSNNLKC (61 aa)). Disulfide bonds link Cys-11-Cys-61, Cys-15-Cys-37, Cys-23-Cys-42, and Cys-27-Cys-44.

This sequence belongs to the long (4 C-C) scorpion toxin superfamily. Sodium channel inhibitor family. Beta subfamily. As to expression, expressed by the venom gland.

The protein resides in the secreted. Shows antibacterial activity against both Gram-positive bacteria (B.subtilis, M.luteus, E.faecalis) and Gram-negative bacteria (P.aeruginosa, Y.enterocolitica, A.calcoaceticus). Modifies membrane sodium permeability on Y.enterocolitica. Is toxic to cockroaches and crabs, but is not toxic to mice. Does not induce haemolysis in human erythrocytes. Acts by inhibiting the sodium (Nav) currents. In Tityus discrepans (Venezuelan scorpion), this protein is Bactridin-1.